The primary structure comprises 842 residues: Glycogen phosphorylase, muscle form (842 aa).

Ser-2 is modified (N-acetylserine). A Phosphoserine; by PHK; in form phosphorylase A modification is found at Ser-15. AMP is bound by residues Asp-43 and Tyr-76. A phosphotyrosine mark is found at Tyr-204 and Tyr-227. AMP is bound at residue 310-319 (RRFKSSKFGC). Position 430 is a phosphoserine (Ser-430). A Phosphotyrosine modification is found at Tyr-473. Position 681 is an N6-(pyridoxal phosphate)lysine (Lys-681). Residues Ser-747 and Ser-748 each carry the phosphoserine modification.

The protein belongs to the glycogen phosphorylase family. As to quaternary structure, homodimer. Homotetramer; to form the enzymatically active phosphorylase A. Pyridoxal 5'-phosphate is required as a cofactor. Phosphorylation of Ser-15 converts phosphorylase B (unphosphorylated) to phosphorylase A.

It catalyses the reaction [(1-&gt;4)-alpha-D-glucosyl](n) + phosphate = [(1-&gt;4)-alpha-D-glucosyl](n-1) + alpha-D-glucose 1-phosphate. Allosterically regulated through the non-covalent binding of metabolites, being activated by AMP and inhibited by ATP, ADP, and glucose-6-phosphate. The activity is also controlled by post-translational modifications including phosphorylation. In terms of biological role, allosteric enzyme that catalyzes the rate-limiting step in glycogen catabolism, the phosphorolytic cleavage of glycogen to produce glucose-1-phosphate, and plays a central role in maintaining cellular and organismal glucose homeostasis. The chain is Glycogen phosphorylase, muscle form from Bos taurus (Bovine).